The sequence spans 336 residues: Fructose-1,6-bisphosphatase class 1 (336 aa).

Positions 90, 112, 114, and 115 each coordinate Mg(2+). Substrate contacts are provided by residues 115 to 118 (DGSS), asparagine 211, and lysine 277. Glutamate 283 lines the Mg(2+) pocket.

This sequence belongs to the FBPase class 1 family. Homotetramer. The cofactor is Mg(2+).

It localises to the cytoplasm. It catalyses the reaction beta-D-fructose 1,6-bisphosphate + H2O = beta-D-fructose 6-phosphate + phosphate. It participates in carbohydrate biosynthesis; gluconeogenesis. The sequence is that of Fructose-1,6-bisphosphatase class 1 from Pseudomonas fluorescens (strain ATCC BAA-477 / NRRL B-23932 / Pf-5).